The sequence spans 187 residues: Peptidyl-tRNA hydrolase (187 aa).

Tyr14 contributes to the tRNA binding site. The active-site Proton acceptor is His19. Tyr60, Asn62, and Asn108 together coordinate tRNA.

It belongs to the PTH family. In terms of assembly, monomer.

The protein resides in the cytoplasm. The catalysed reaction is an N-acyl-L-alpha-aminoacyl-tRNA + H2O = an N-acyl-L-amino acid + a tRNA + H(+). In terms of biological role, hydrolyzes ribosome-free peptidyl-tRNAs (with 1 or more amino acids incorporated), which drop off the ribosome during protein synthesis, or as a result of ribosome stalling. Functionally, catalyzes the release of premature peptidyl moieties from peptidyl-tRNA molecules trapped in stalled 50S ribosomal subunits, and thus maintains levels of free tRNAs and 50S ribosomes. The chain is Peptidyl-tRNA hydrolase from Mycoplasmopsis synoviae (strain 53) (Mycoplasma synoviae).